The primary structure comprises 178 residues: Large ribosomal subunit protein bL25 (178 aa).

Belongs to the bacterial ribosomal protein bL25 family. CTC subfamily. As to quaternary structure, part of the 50S ribosomal subunit; part of the 5S rRNA/L5/L18/L25 subcomplex. Contacts the 5S rRNA. Binds to the 5S rRNA independently of L5 and L18.

Its function is as follows. This is one of the proteins that binds to the 5S RNA in the ribosome where it forms part of the central protuberance. This Campylobacter jejuni subsp. jejuni serotype O:6 (strain 81116 / NCTC 11828) protein is Large ribosomal subunit protein bL25.